A 321-amino-acid polypeptide reads, in one-letter code: MDSDFVPPSVSFQLPVIDFSDQNLKPGSSKWDEVKADVLKALEDYGCFEAFFDKLSVELNRSVFEAMEDLFELPIPTKQRNVSSKPFHGYLCHNLYESLGIDDANVLEKVNDFTQQLWPDHGNKSISETIHLFSEQLVELDLMVRRMIMESFGIENYIDEHLNSTYYLTRLMKYTSPPDDDDDDEETKLGLRSHTDKNIITILHQYQVDGLEVKTKDDKWIKVKPSQDSVLVMVGDSLCALLNGRLHSPYHRVIMTGKKTRYSTGLFSIPKTGVIIDSPEELVDKEHPRIFKPFEYTDFLHFFQTEAGRIAQSALHAFAAF.

One can recognise a Fe2OG dioxygenase domain in the interval 165 to 270 (TYYLTRLMKY…RYSTGLFSIP (106 aa)). Fe cation contacts are provided by His194, Asp196, and His251. Arg261 contributes to the 2-oxoglutarate binding site.

This sequence belongs to the iron/ascorbate-dependent oxidoreductase family. Fe(2+) serves as cofactor.

In terms of biological role, probable 2-oxoglutarate-dependent dioxygenase that may be involved in glucosinolates biosynthesis. May play a role in the production of aliphatic glucosinolates. The protein is Probable 2-oxoglutarate-dependent dioxygenase AOP1.2 (AOP1.2) of Arabidopsis thaliana (Mouse-ear cress).